The chain runs to 60 residues: Large ribosomal subunit protein bL32 (60 aa).

Positions 1–60 are disordered; it reads MAVQQNKKSPSKRGMHRSHNALTVPGIAVEPTTGETHLRHHISPNGFYRGRQVLKNKSEA. Basic residues predominate over residues 9–19; the sequence is SPSKRGMHRSH.

Belongs to the bacterial ribosomal protein bL32 family.

This Paracidovorax citrulli (strain AAC00-1) (Acidovorax citrulli) protein is Large ribosomal subunit protein bL32.